We begin with the raw amino-acid sequence, 288 residues long: Syntaxin-1A (288 aa).

Over 1–265 (MKDRTQELRT…KYQSKARRKK (265 aa)) the chain is Cytoplasmic. Phosphoserine is present on residues serine 14, serine 64, and serine 95. Residues 68 to 109 (DEKTKEELEELMSDIKKTANKVRSKLKSIEQSIEQEEGLNRS) are a coiled coil. Serine 188 carries the phosphoserine; by DAPK1 modification. The t-SNARE coiled-coil homology domain maps to 192–254 (LSEIETRHSE…ERAVSDTKKA (63 aa)). Glycyl lysine isopeptide (Lys-Gly) (interchain with G-Cter in SUMO) cross-links involve residues lysine 252, lysine 253, and lysine 256. A helical; Anchor for type IV membrane protein membrane pass occupies residues 266-286 (IMIIICCVILGIVIASTVGGI). Topologically, residues 287–288 (FA) are extracellular.

It belongs to the syntaxin family. As to quaternary structure, part of the SNARE core complex containing SNAP25, VAMP2 and STX1A; this complex constitutes the basic catalytic machinery of the complex neurotransmitter release apparatus. The SNARE complex interacts with CPLX1. Interacts with STXBP1. The interaction with STXBP1 promotes assembly of the SNARE complex. Interacts (via C-terminus) with KCNB1 (via C-terminus); the interaction increases in a calcium-dependent manner and induces a pore-independent enhancement of exocytosis in neuroendocrine cells, chromaffin cells, pancreatic beta cells and from the soma of dorsal root ganglia (DRG) neurons. Interacts with SYTL4. Interacts with STXBP6. Interacts with PLCL1 (via C2 domain). Interacts with OTOF. Interacts with LGI3. Interacts (via the H3 domain) with SLC6A4 (via the N-terminus); this interaction regulates SLC4A6 channel conductance in thalamocortical neurons. Interacts with SYT6 and SYT8; the interaction is Ca(2+)-dependent. Interacts with VAMP8. Interacts with SNAP23. Interacts with VAPA and SYBU. Interacts with PRRT2. Interacts with SEPT8. Interacts with STXBP5L. Interacts with synaptotagmin-1/SYT1. Interacts with SEPTIN5; in the cerebellar cortex. Interacts with SEPTIN4; in the striatum. In terms of processing, phosphorylated by CK2. Phosphorylation at Ser-188 by DAPK1 significantly decreases its interaction with STXBP1. Sumoylated, sumoylation is required for regulation of synaptic vesicle endocytosis. Highly expressed in embryonic spinal cord and ganglia and in adult cerebellum and cerebral cortex. As to expression, expressed in heart, liver, fat, skeletal muscle, kidney and brain.

It is found in the cytoplasmic vesicle. Its subcellular location is the secretory vesicle. The protein localises to the synaptic vesicle membrane. It localises to the synapse. The protein resides in the synaptosome. It is found in the cell membrane. Its subcellular location is the secreted. Plays an essential role in hormone and neurotransmitter calcium-dependent exocytosis and endocytosis. Part of the SNARE (Soluble NSF Attachment Receptor) complex composed of SNAP25, STX1A and VAMP2 which mediates the fusion of synaptic vesicles with the presynaptic plasma membrane. STX1A and SNAP25 are localized on the plasma membrane while VAMP2 resides in synaptic vesicles. The pairing of the three SNAREs from the N-terminal SNARE motifs to the C-terminal anchors leads to the formation of the SNARE complex, which brings membranes into close proximity and results in final fusion. Participates in the calcium-dependent regulation of acrosomal exocytosis in sperm. Also plays an important role in the exocytosis of hormones such as insulin or glucagon-like peptide 1 (GLP-1). The protein is Syntaxin-1A (STX1A) of Homo sapiens (Human).